The sequence spans 755 residues: Proprotein convertase subtilisin/kexin type 4 (755 aa).

The first 25 residues, Met-1 to Gly-25, serve as a signal peptide directing secretion. Positions Trp-26–Arg-113 are excised as a propeptide. The region spanning Gln-126 to Val-440 is the Peptidase S8 domain. Catalysis depends on charge relay system residues Asp-158, His-199, and Ser-373. The P/Homo B domain maps to Thr-449–Asp-581. N-linked (GlcNAc...) asparagine glycans are attached at residues Asn-475 and Asn-629. Residues Ala-709–Met-729 traverse the membrane as a helical segment.

This sequence belongs to the peptidase S8 family. Furin subfamily. In terms of assembly, the proPCSK4 form interacts with HSPA5; the interaction takes place at the endoplasmic reticulum. N-glycosylated. In terms of processing, synthesized in the endoplasmic reticulum as a zymogen, is matured by autocatalytic cleavage between the prodomain and the catalytic domain. Placenta.

It is found in the membrane. Its subcellular location is the cytoplasmic vesicle. The protein resides in the secretory vesicle. The protein localises to the acrosome membrane. Proprotein convertase involved in the processing of hormone and other protein precursors at sites comprised of pairs of basic amino acid residues. In males, important for ADAM2 processing as well as other acrosomal proteins with roles in fertilization and critical for normal fertilization events such as sperm capacitation, acrosome reaction and binding of sperm to zona pellucida. Also plays a role in female fertility, involved in the regulation of trophoblast migration and placental development, may be through the proteolytical processing and activation of proteins such as IGF2. May also participate in folliculogenesis in the ovaries. In Homo sapiens (Human), this protein is Proprotein convertase subtilisin/kexin type 4.